The following is a 294-amino-acid chain: Diaminopimelate epimerase (294 aa).

Positions 11 and 78 each coordinate substrate. Cys87 serves as the catalytic Proton donor. Substrate contacts are provided by residues 88 to 89 (GN), Asn167, Asn203, and 221 to 222 (ER). Residue Cys230 is the Proton acceptor of the active site. 231-232 (GT) lines the substrate pocket.

It belongs to the diaminopimelate epimerase family. In terms of assembly, homodimer.

It localises to the cytoplasm. It carries out the reaction (2S,6S)-2,6-diaminopimelate = meso-2,6-diaminopimelate. It functions in the pathway amino-acid biosynthesis; L-lysine biosynthesis via DAP pathway; DL-2,6-diaminopimelate from LL-2,6-diaminopimelate: step 1/1. In terms of biological role, catalyzes the stereoinversion of LL-2,6-diaminopimelate (L,L-DAP) to meso-diaminopimelate (meso-DAP), a precursor of L-lysine and an essential component of the bacterial peptidoglycan. The protein is Diaminopimelate epimerase of Mycolicibacterium paratuberculosis (strain ATCC BAA-968 / K-10) (Mycobacterium paratuberculosis).